The chain runs to 258 residues: DNA repair protein RecO (258 aa).

The protein belongs to the RecO family.

Functionally, involved in DNA repair and RecF pathway recombination. This is DNA repair protein RecO from Oceanobacillus iheyensis (strain DSM 14371 / CIP 107618 / JCM 11309 / KCTC 3954 / HTE831).